The following is a 473-amino-acid chain: Dynein axonemal assembly factor 11 (473 aa).

4 LRR repeats span residues 22 to 43 (SLEE…DKWC), 45 to 66 (DLKI…SKLK), 67 to 88 (KLEY…EGCE), and 89 to 110 (WLTK…KTLT). The LRRCT domain maps to 123 to 161 (NPCADFDGYRQFVVVTLQQLKWLDGKEIERSERIQALQN). Residues 153–205 (SERIQALQNYTSVEQQIREQEKAYCLRRAKEKEEAQRKLEEENESEDKKKSST) adopt a coiled-coil conformation. Basic and acidic residues-rich tracts occupy residues 188–202 (QRKL…DKKK) and 273–283 (EKQRKAQDKLS). 3 disordered regions span residues 188 to 244 (QRKL…TKES), 273 to 292 (EKQR…AKPP), and 387 to 473 (VGEM…PPLI). The region spanning 305–402 (VNEAKLDFSL…GGQRTPTSVK (98 aa)) is the CS domain. Positions 397–408 (TPTSVKTTSTSS) are enriched in low complexity. Positions 417-431 (KQIERLEVDPSKHSC) are enriched in basic and acidic residues. Residues 456–467 (PSEEDPDFEDNP) are compositionally biased toward acidic residues.

This sequence belongs to the tilB family. Interacts (via CS domain) with ZMYND10 (via C-terminus). In terms of tissue distribution, mainly expressed in cells with motile cilia. Expressed in epithelial cells of the trachea, testis and ependymal cells of the cerebral ventricles. In testis, abundant expression in late prophase of meiosis I with a dramatic decrease after the first meiotic division (at protein level).

The protein resides in the cytoplasm. The protein localises to the cell projection. It localises to the cilium. It is found in the dynein axonemal particle. Its subcellular location is the flagellum. Functionally, involved in dynein arm assembly, is important for expression and transporting outer dynein arm (ODA) proteins from the cytoplasm to the cilia. Acts as a crucial component in the formation and motility of spermatozoal flagella. The polypeptide is Dynein axonemal assembly factor 11 (Dnaaf11) (Mus musculus (Mouse)).